The sequence spans 458 residues: uncharacterized protein (458 aa).

The protein belongs to the MG032/MG096/MG288 family.

This is an uncharacterized protein from Mycoplasma pneumoniae (strain ATCC 29342 / M129 / Subtype 1) (Mycoplasmoides pneumoniae).